The sequence spans 81 residues: Photosystem I iron-sulfur center (81 aa).

2 consecutive 4Fe-4S ferredoxin-type domains span residues 2–31 and 39–68; these read AHSV…MIPW and IASA…VRVY. Residues cysteine 11, cysteine 14, cysteine 17, cysteine 21, cysteine 48, cysteine 51, cysteine 54, and cysteine 58 each coordinate [4Fe-4S] cluster.

As to quaternary structure, the eukaryotic PSI reaction center is composed of at least 11 subunits. Requires [4Fe-4S] cluster as cofactor.

It is found in the plastid. The protein resides in the chloroplast thylakoid membrane. It carries out the reaction reduced [plastocyanin] + hnu + oxidized [2Fe-2S]-[ferredoxin] = oxidized [plastocyanin] + reduced [2Fe-2S]-[ferredoxin]. Functionally, apoprotein for the two 4Fe-4S centers FA and FB of photosystem I (PSI); essential for photochemical activity. FB is the terminal electron acceptor of PSI, donating electrons to ferredoxin. The C-terminus interacts with PsaA/B/D and helps assemble the protein into the PSI complex. Required for binding of PsaD and PsaE to PSI. PSI is a plastocyanin-ferredoxin oxidoreductase, converting photonic excitation into a charge separation, which transfers an electron from the donor P700 chlorophyll pair to the spectroscopically characterized acceptors A0, A1, FX, FA and FB in turn. The sequence is that of Photosystem I iron-sulfur center from Cycas taitungensis (Prince sago).